Here is a 287-residue protein sequence, read N- to C-terminus: Light-independent protochlorophyllide reductase iron-sulfur ATP-binding protein (287 aa).

Residues 10 to 15 (GVGKST) and Lys-39 each bind ATP. Residue Ser-14 participates in Mg(2+) binding. [4Fe-4S] cluster-binding residues include Cys-95 and Cys-129. Position 181–182 (181–182 (NR)) interacts with ATP.

It belongs to the NifH/BchL/ChlL family. As to quaternary structure, homodimer. Protochlorophyllide reductase is composed of three subunits; BchL, BchN and BchB. [4Fe-4S] cluster serves as cofactor.

The catalysed reaction is chlorophyllide a + oxidized 2[4Fe-4S]-[ferredoxin] + 2 ADP + 2 phosphate = protochlorophyllide a + reduced 2[4Fe-4S]-[ferredoxin] + 2 ATP + 2 H2O. The protein operates within porphyrin-containing compound metabolism; bacteriochlorophyll biosynthesis (light-independent). Functionally, component of the dark-operative protochlorophyllide reductase (DPOR) that uses Mg-ATP and reduced ferredoxin to reduce ring D of protochlorophyllide (Pchlide) to form chlorophyllide a (Chlide). This reaction is light-independent. The L component serves as a unique electron donor to the NB-component of the complex, and binds Mg-ATP. The protein is Light-independent protochlorophyllide reductase iron-sulfur ATP-binding protein of Heliobacterium modesticaldum (strain ATCC 51547 / Ice1).